A 204-amino-acid chain; its full sequence is 3-isopropylmalate dehydratase small subunit (204 aa).

Belongs to the LeuD family. LeuD type 1 subfamily. As to quaternary structure, heterodimer of LeuC and LeuD.

It catalyses the reaction (2R,3S)-3-isopropylmalate = (2S)-2-isopropylmalate. It participates in amino-acid biosynthesis; L-leucine biosynthesis; L-leucine from 3-methyl-2-oxobutanoate: step 2/4. Functionally, catalyzes the isomerization between 2-isopropylmalate and 3-isopropylmalate, via the formation of 2-isopropylmaleate. This is 3-isopropylmalate dehydratase small subunit from Roseiflexus sp. (strain RS-1).